The following is a 146-amino-acid chain: Protein MGF 100-3L (146 aa).

Belongs to the asfivirus MGF 100 family.

Plays a role in virus cell tropism, and may be required for efficient virus replication in macrophages. The sequence is that of Protein MGF 100-3L from Ornithodoros (relapsing fever ticks).